Consider the following 473-residue polypeptide: ATP synthase subunit beta (473 aa).

158 to 165 (GGAGVGKT) serves as a coordination point for ATP.

This sequence belongs to the ATPase alpha/beta chains family. F-type ATPases have 2 components, CF(1) - the catalytic core - and CF(0) - the membrane proton channel. CF(1) has five subunits: alpha(3), beta(3), gamma(1), delta(1), epsilon(1). CF(0) has three main subunits: a(1), b(2) and c(9-12). The alpha and beta chains form an alternating ring which encloses part of the gamma chain. CF(1) is attached to CF(0) by a central stalk formed by the gamma and epsilon chains, while a peripheral stalk is formed by the delta and b chains.

The protein localises to the cell membrane. The catalysed reaction is ATP + H2O + 4 H(+)(in) = ADP + phosphate + 5 H(+)(out). In terms of biological role, produces ATP from ADP in the presence of a proton gradient across the membrane. The catalytic sites are hosted primarily by the beta subunits. The polypeptide is ATP synthase subunit beta (Geobacillus stearothermophilus (Bacillus stearothermophilus)).